A 196-amino-acid polypeptide reads, in one-letter code: Imidazoleglycerol-phosphate dehydratase (196 aa).

The protein belongs to the imidazoleglycerol-phosphate dehydratase family.

Its subcellular location is the cytoplasm. It catalyses the reaction D-erythro-1-(imidazol-4-yl)glycerol 3-phosphate = 3-(imidazol-4-yl)-2-oxopropyl phosphate + H2O. It functions in the pathway amino-acid biosynthesis; L-histidine biosynthesis; L-histidine from 5-phospho-alpha-D-ribose 1-diphosphate: step 6/9. The polypeptide is Imidazoleglycerol-phosphate dehydratase (Solidesulfovibrio magneticus (strain ATCC 700980 / DSM 13731 / RS-1) (Desulfovibrio magneticus)).